We begin with the raw amino-acid sequence, 194 residues long: RNA polymerase II subunit A C-terminal domain phosphatase SSU72 like protein 5 (194 aa).

This sequence belongs to the SSU72 phosphatase family.

It is found in the nucleus. The catalysed reaction is O-phospho-L-seryl-[protein] + H2O = L-seryl-[protein] + phosphate. The enzyme catalyses O-phospho-L-threonyl-[protein] + H2O = L-threonyl-[protein] + phosphate. In terms of biological role, protein phosphatase that catalyzes the dephosphorylation of the C-terminal domain of RNA polymerase II. Plays a role in RNA processing and termination. This is RNA polymerase II subunit A C-terminal domain phosphatase SSU72 like protein 5 from Homo sapiens (Human).